We begin with the raw amino-acid sequence, 340 residues long: Phosphoribosylformylglycinamidine cyclo-ligase (340 aa).

This sequence belongs to the AIR synthase family.

It is found in the cytoplasm. It catalyses the reaction 2-formamido-N(1)-(5-O-phospho-beta-D-ribosyl)acetamidine + ATP = 5-amino-1-(5-phospho-beta-D-ribosyl)imidazole + ADP + phosphate + H(+). It participates in purine metabolism; IMP biosynthesis via de novo pathway; 5-amino-1-(5-phospho-D-ribosyl)imidazole from N(2)-formyl-N(1)-(5-phospho-D-ribosyl)glycinamide: step 2/2. The protein is Phosphoribosylformylglycinamidine cyclo-ligase of Macrococcus caseolyticus (strain JCSC5402) (Macrococcoides caseolyticum).